We begin with the raw amino-acid sequence, 495 residues long: FK506-binding protein 4 (495 aa).

Disordered stretches follow at residues 115–198 (GSDD…ADLE), 243–312 (MDDD…NKRA), and 333–385 (KQQK…KPAT). Composition is skewed to acidic residues over residues 116–126 (SDDEEDSDEEA), 152–161 (AQEESDEEME), 178–196 (ESDD…EGAD), and 243–283 (MDDD…LDGL). The segment covering 373 to 382 (EKPKQAKDSK) has biased composition (basic and acidic residues). In terms of domain architecture, PPIase FKBP-type spans 409–495 (GDTVGVRYIG…IFDVKLLEIK (87 aa)).

It belongs to the FKBP-type PPIase family. FKBP3/4 subfamily. In terms of assembly, binds to histones H3 and H4.

Its subcellular location is the nucleus. It carries out the reaction [protein]-peptidylproline (omega=180) = [protein]-peptidylproline (omega=0). Inhibited by both FK506 and rapamycin. PPIase that acts as a histone chaperone. Histone proline isomerase that increases the rate of cis-trans isomerization at prolines on the histone H3 N-terminal tail. Proline isomerization influences H3 methylation thereby regulating gene expression. This is FK506-binding protein 4 (FPR4) from Gibberella zeae (strain ATCC MYA-4620 / CBS 123657 / FGSC 9075 / NRRL 31084 / PH-1) (Wheat head blight fungus).